The sequence spans 295 residues: Virginiamycin B lyase (295 aa).

Substrate is bound at residue H228. E268 lines the Mg(2+) pocket. The active-site Proton acceptor is the H270. E285 contacts Mg(2+).

This sequence belongs to the Vgb family. In terms of assembly, monomer. Requires Mg(2+) as cofactor.

Inactivates the type B streptogramin antibiotics by linearizing the lactone ring at the ester linkage, generating a free phenylglycine carboxylate and converting the threonyl moiety into 2-amino-butenoic acid. The protein is Virginiamycin B lyase of Clostridium beijerinckii (strain ATCC 51743 / NCIMB 8052) (Clostridium acetobutylicum).